A 188-amino-acid chain; its full sequence is Elongation factor P-like protein (188 aa).

This sequence belongs to the elongation factor P family.

This is Elongation factor P-like protein from Xanthomonas euvesicatoria pv. vesicatoria (strain 85-10) (Xanthomonas campestris pv. vesicatoria).